The chain runs to 157 residues: Methylamine utilization protein MauL (157 aa).

It functions in the pathway one-carbon metabolism; methylamine degradation. Probably involved in TTQ prosthetic group biosynthesis. The protein is Methylamine utilization protein MauL (mauL) of Methylobacillus flagellatus (strain ATCC 51484 / DSM 6875 / VKM B-1610 / KT).